A 359-amino-acid chain; its full sequence is DNA replication and repair protein RecF (359 aa).

30-37 contributes to the ATP binding site; the sequence is GPNAKGKT.

This sequence belongs to the RecF family.

Its subcellular location is the cytoplasm. In terms of biological role, the RecF protein is involved in DNA metabolism; it is required for DNA replication and normal SOS inducibility. RecF binds preferentially to single-stranded, linear DNA. It also seems to bind ATP. This Protochlamydia amoebophila (strain UWE25) protein is DNA replication and repair protein RecF.